The chain runs to 340 residues: Ketol-acid reductoisomerase (NADP(+)) (340 aa).

A KARI N-terminal Rossmann domain is found at 1-183 (MAITVYYDKD…GGGRTGIIET (183 aa)). NADP(+) contacts are provided by residues 26–29 (FGSQ), Arg-49, Ser-52, Ser-54, and 84–87 (DEIQ). The active site involves His-109. An NADP(+)-binding site is contributed by Gly-135. The region spanning 184 to 329 (TFKAETETDL…RNLRAMMPWI (146 aa)) is the KARI C-terminal knotted domain. The Mg(2+) site is built by Asp-192, Glu-196, Glu-228, and Glu-232. Ser-253 provides a ligand contact to substrate.

This sequence belongs to the ketol-acid reductoisomerase family. It depends on Mg(2+) as a cofactor.

The enzyme catalyses (2R)-2,3-dihydroxy-3-methylbutanoate + NADP(+) = (2S)-2-acetolactate + NADPH + H(+). It carries out the reaction (2R,3R)-2,3-dihydroxy-3-methylpentanoate + NADP(+) = (S)-2-ethyl-2-hydroxy-3-oxobutanoate + NADPH + H(+). It participates in amino-acid biosynthesis; L-isoleucine biosynthesis; L-isoleucine from 2-oxobutanoate: step 2/4. It functions in the pathway amino-acid biosynthesis; L-valine biosynthesis; L-valine from pyruvate: step 2/4. Its function is as follows. Involved in the biosynthesis of branched-chain amino acids (BCAA). Catalyzes an alkyl-migration followed by a ketol-acid reduction of (S)-2-acetolactate (S2AL) to yield (R)-2,3-dihydroxy-isovalerate. In the isomerase reaction, S2AL is rearranged via a Mg-dependent methyl migration to produce 3-hydroxy-3-methyl-2-ketobutyrate (HMKB). In the reductase reaction, this 2-ketoacid undergoes a metal-dependent reduction by NADPH to yield (R)-2,3-dihydroxy-isovalerate. This is Ketol-acid reductoisomerase (NADP(+)) from Campylobacter jejuni subsp. jejuni serotype O:2 (strain ATCC 700819 / NCTC 11168).